The sequence spans 324 residues: MYG1 protein C694.04c (324 aa).

This sequence belongs to the MYG1 family.

This Schizosaccharomyces pombe (strain 972 / ATCC 24843) (Fission yeast) protein is MYG1 protein C694.04c.